The sequence spans 169 residues: uncharacterized protein (169 aa).

The region spanning Glu-28–Gln-157 is the Nudix hydrolase domain. The Nudix box motif lies at Ala-65 to Gly-87. Mg(2+)-binding residues include Glu-81 and Glu-85.

It belongs to the Nudix hydrolase family. Mg(2+) serves as cofactor.

This is an uncharacterized protein from Listeria monocytogenes serovar 1/2a (strain ATCC BAA-679 / EGD-e).